Here is a 299-residue protein sequence, read N- to C-terminus: Biotin transporter (299 aa).

Transmembrane regions (helical) follow at residues 2-22 (ALLI…GEYL), 26-46 (VDSY…FLPF), 56-76 (TISL…MLSF), 81-101 (YLTV…ITLI), 110-130 (LRWG…IIRY), 137-157 (FWVG…GMVG), 172-192 (AFAW…SLLG), 202-222 (LQWS…YFMW), 233-253 (TLGI…LAIW), and 256-276 (QPHW…LWVH). EamA domains lie at 3-128 (LLII…AGII) and 139-274 (VGLL…ASLW).

Belongs to the drug/metabolite transporter (DMT) superfamily. 10 TMS drug/metabolite exporter (DME) (TC 2.A.7.3) family.

It localises to the cell inner membrane. The enzyme catalyses biotin(in) = biotin(out). Its function is as follows. Uptake of biotin. The sequence is that of Biotin transporter from Salmonella typhi.